A 33-amino-acid chain; its full sequence is Pardaxin P-4 (33 aa).

The protein belongs to the pardaxin family. Monomer. In aqueous solution exists as a tetramer.

It is found in the secreted. Its subcellular location is the target cell membrane. Exhibits unusual shark repellent and surfactant properties. Forms voltage-dependent, ion-permeable channels in membranes. At high concentration causes cell membrane lysis. This is Pardaxin P-4 from Pardachirus marmoratus (Finless sole).